The sequence spans 177 residues: MSRVAKAPVVVPAGVDVKINGQVITIKGKNGELTRTLNDAVEVKHADNALTFGPRDGYADGWAQAGTARALLNSMVIGVTEGFTKKLQLVGVGYRAAVKGNVVNLALGFSHPVDHQLPAGITAECPTQTEIVLKGADKQVIGQVAADLRAYRRPEPYKGKGVRYADEVVRTKEAKKK.

The protein belongs to the universal ribosomal protein uL6 family. In terms of assembly, part of the 50S ribosomal subunit.

In terms of biological role, this protein binds to the 23S rRNA, and is important in its secondary structure. It is located near the subunit interface in the base of the L7/L12 stalk, and near the tRNA binding site of the peptidyltransferase center. The protein is Large ribosomal subunit protein uL6 of Klebsiella pneumoniae subsp. pneumoniae (strain ATCC 700721 / MGH 78578).